We begin with the raw amino-acid sequence, 341 residues long: Glycerol-1-phosphate dehydrogenase [NAD(P)+] (341 aa).

Residues 81–85 (GKAID) and 103–106 (TTAS) contribute to the NAD(+) site. Residue Asp108 coordinates substrate. Ser112 contributes to the NAD(+) binding site. Asp151 is a binding site for substrate. Zn(2+) is bound by residues Asp151 and His232. His236 is a substrate binding site. His253 is a Zn(2+) binding site.

The protein belongs to the glycerol-1-phosphate dehydrogenase family. Zn(2+) is required as a cofactor.

It is found in the cytoplasm. It catalyses the reaction sn-glycerol 1-phosphate + NAD(+) = dihydroxyacetone phosphate + NADH + H(+). It carries out the reaction sn-glycerol 1-phosphate + NADP(+) = dihydroxyacetone phosphate + NADPH + H(+). The protein operates within membrane lipid metabolism; glycerophospholipid metabolism. In terms of biological role, catalyzes the NAD(P)H-dependent reduction of dihydroxyacetonephosphate (DHAP or glycerone phosphate) to glycerol 1-phosphate (G1P). The G1P thus generated is used as the glycerophosphate backbone of phospholipids in the cellular membranes of Archaea. This Methanococcus aeolicus (strain ATCC BAA-1280 / DSM 17508 / OCM 812 / Nankai-3) protein is Glycerol-1-phosphate dehydrogenase [NAD(P)+].